Reading from the N-terminus, the 230-residue chain is DNA repair protein rdl1 (230 aa).

In terms of assembly, interacts with rlp1 and sws1.

The protein localises to the cytoplasm. It localises to the nucleus. Its function is as follows. Involved in homologous recombination where it functions at an early stage of recombination in a pre-recombinogenic complex with rlp1 and sws1. Also has a role at a later stage of recombination in association with the rhp55-rhp57 complex. The chain is DNA repair protein rdl1 (rdl1) from Schizosaccharomyces pombe (strain 972 / ATCC 24843) (Fission yeast).